The sequence spans 502 residues: Galactose/methyl galactoside import ATP-binding protein MglA (502 aa).

2 ABC transporter domains span residues 10 to 245 (LEMT…VGRE) and 255 to 502 (NTPK…SRYL). 42–49 (GENGAGKS) provides a ligand contact to ATP.

It belongs to the ABC transporter superfamily. Galactose/methyl galactoside importer (TC 3.A.1.2.3) family. As to quaternary structure, the complex is composed of one ATP-binding protein (MglA), two transmembrane proteins (MglC) and a solute-binding protein (MglB).

The protein localises to the cell inner membrane. It carries out the reaction D-galactose(out) + ATP + H2O = D-galactose(in) + ADP + phosphate + H(+). The enzyme catalyses methyl beta-D-galactoside(out) + ATP + H2O = methyl beta-D-galactoside(in) + ADP + phosphate + H(+). Functionally, part of the ABC transporter complex MglABC involved in galactose/methyl galactoside import. Responsible for energy coupling to the transport system. This chain is Galactose/methyl galactoside import ATP-binding protein MglA, found in Vibrio vulnificus (strain CMCP6).